We begin with the raw amino-acid sequence, 741 residues long: MDAGSKKEDFLLLEDEKFDFDLSLSSSSTNEDDEVFFGPVGHKERCIAASLDLNRRVPGQPLAPGSGSPCTLSPLTGEKFVEVYKEAHLLALQIESHSRREVAQAATPQNPVNQGKETFVQDSQLKVSLFEKEQKRDRSPMSLKRETFCLPSSRVQPPMGEPQLLASPGLLSSPVSAGPAQTQSNQGLPCSSQPLPRESSTSQPPSQAGPQKRITSKLQPPRALPVRGRNLHLATEKLKKEVPASIQRTKLVNEKGSQSDVLQDKPSTAPDAASREGHPGKRSLPIPGKLGLKKTLLKPPGYTGNLTRKSSTSGSASSLESGVYRSSVAGKAKSSEQRSSIPASGSQRRTSTSKSGRIGPAASRQALPAAPARVFGRQANKADAAQTVAEQPKVPTLSPLTQQPQTPEQRGPRLDPDTETPQLNKTVSIKRRDSYLSCKTEAVSTTTNPFKVPQFSVGESPGGVTPKFSRTHRLQSWTPASRVVSSTPVRRSSGTTPQGLPGSMRTPLSTRRMSVLPTPASRRLSSLPLMAPQSMPRALVSPLCVPARRLSSEPRRRSTVRAELTQESSGSGSGGQAQGLSSDESSSPPSSVPQALNFSPEKSASPPPQGSSTGAAQGEAEPPEDTLPSEVHGGGCSHTPSEGLLLDLKLDQLTITPEAGGRDLADCPLIDFSNTPESNTALGPSSWPLIDLIMNTPDMGRNDVGKPAKAELGQLIDLGSPLIQLSPEADKENVDSPLLKF.

Ser73 carries the phosphoserine modification. Disordered stretches follow at residues Glu101–Val120, Glu131–Ser428, and Phe450–Arg512. Residues Ala106–Val120 are compositionally biased toward polar residues. The span at Glu131 to Thr147 shows a compositional bias: basic and acidic residues. Ser139, Ser153, Ser191, and Ser245 each carry phosphoserine. Positions Ser173–Gly209 are enriched in polar residues. A compositionally biased stretch (polar residues) spans Ile246–Val261. Over residues Ser310–Ser321 the composition is skewed to low complexity. Ser311 carries the post-translational modification Phosphoserine. The span at Gln337–Ser355 shows a compositional bias: polar residues. Positions Pro360–Ala372 are enriched in low complexity. Residues Ser398–Glu408 are compositionally biased toward polar residues. The residue at position 460 (Ser460) is a Phosphoserine. The residue at position 465 (Thr465) is a Phosphothreonine. 4 positions are modified to phosphoserine: Ser476, Ser493, Ser509, and Ser514. A compositionally biased stretch (low complexity) spans Thr478–Pro497. Residue Thr518 is modified to Phosphothreonine. Phosphoserine is present on residues Ser521, Ser541, Ser582, and Ser599. The segment at Leu550–Pro640 is disordered. Over residues Gln578 to Pro593 the composition is skewed to low complexity. The residue at position 696 (Thr696) is a Phosphothreonine. Residues Ser720, Ser726, and Ser736 each carry the phosphoserine modification.

In terms of processing, phosphorylated in mitosis.

The protein resides in the cytoplasm. It localises to the cytoskeleton. In terms of biological role, may be involved in p53-induced cell cycle arrest in G2/M phase by interfering with microtubule rearrangements that are required to enter mitosis. Overexpression delays G2/M phase progression. The protein is G2 and S phase-expressed protein 1 (Gtse1) of Mus musculus (Mouse).